A 1209-amino-acid polypeptide reads, in one-letter code: Protein phosphatase 1 regulatory subunit 26 (1209 aa).

Disordered regions lie at residues 57-91 (DGAARGTSDERAAQRGHRAEGCHDARPAAKPTVHK), 145-279 (SGAA…HRQG), 291-471 (KPPR…VERS), 501-532 (GSDGSLSASPLFYSPNVPSRSDGDSSSVDSDD), 555-694 (GESC…EDLD), 733-836 (EQLG…SNDS), 848-1033 (KAKE…FAHQ), 1052-1072 (RGGVGSERDKGSEGPARGLPS), and 1118-1209 (AFRE…VVKV). Residues 63-91 (TSDERAAQRGHRAEGCHDARPAAKPTVHK) are compositionally biased toward basic and acidic residues. Residues 201–219 (QVGSSKDQGSASPVSVSSD) are compositionally biased toward low complexity. The segment covering 226-255 (IRAEIEQFLNEKRQHETQKCDGSVEKKPDT) has biased composition (basic and acidic residues). Residues 301-321 (QPRSLRSKVTTTQENEGSTKP) show a composition bias toward polar residues. Low complexity predominate over residues 352–362 (SAAQASEASDS). Residues 442-454 (DTDHAPKLLKETK) are compositionally biased toward basic and acidic residues. Basic and acidic residues-rich tracts occupy residues 609-637 (KMQEVVKDGSQDADHSQGRAEPGHERRDL), 667-685 (KTDEARRLDEKESSEDKSS), and 757-766 (SKRDSGEGPG). Composition is skewed to low complexity over residues 821 to 836 (PGSLSDDSSSVDSNDS) and 852 to 861 (SVSSSEVQAE). A Phosphoserine modification is found at Ser1161. The span at 1187 to 1209 (GSDASDFSDTSTEDSGGSSVVKV) shows a compositional bias: low complexity.

In terms of assembly, interacts with UTP20 and PPP1CA. In terms of tissue distribution, ubiquitous in normal tissues. Expressed in numerous adenocarcinoma cell lines.

The protein resides in the nucleus. The protein localises to the nucleolus. Functionally, inhibits phosphatase activity of protein phosphatase 1 (PP1) complexes. May positively regulate cell proliferation. This is Protein phosphatase 1 regulatory subunit 26 (PPP1R26) from Homo sapiens (Human).